The sequence spans 308 residues: Aspartate carbamoyltransferase catalytic subunit (308 aa).

The carbamoyl phosphate site is built by arginine 58 and threonine 59. Lysine 86 lines the L-aspartate pocket. Positions 108, 136, and 139 each coordinate carbamoyl phosphate. Positions 169 and 227 each coordinate L-aspartate. 2 residues coordinate carbamoyl phosphate: glycine 268 and proline 269.

This sequence belongs to the aspartate/ornithine carbamoyltransferase superfamily. ATCase family. As to quaternary structure, heterododecamer (2C3:3R2) of six catalytic PyrB chains organized as two trimers (C3), and six regulatory PyrI chains organized as three dimers (R2).

The enzyme catalyses carbamoyl phosphate + L-aspartate = N-carbamoyl-L-aspartate + phosphate + H(+). It functions in the pathway pyrimidine metabolism; UMP biosynthesis via de novo pathway; (S)-dihydroorotate from bicarbonate: step 2/3. Catalyzes the condensation of carbamoyl phosphate and aspartate to form carbamoyl aspartate and inorganic phosphate, the committed step in the de novo pyrimidine nucleotide biosynthesis pathway. This Chloroflexus aggregans (strain MD-66 / DSM 9485) protein is Aspartate carbamoyltransferase catalytic subunit.